Here is a 234-residue protein sequence, read N- to C-terminus: Eukaryotic translation initiation factor 3 subunit K (234 aa).

The PCI domain maps to 46-219 (SDIEANLALL…EAKPATTTES (174 aa)).

The protein belongs to the eIF-3 subunit K family. Component of the eukaryotic translation initiation factor 3 (eIF-3) complex.

The protein resides in the cytoplasm. Functionally, component of the eukaryotic translation initiation factor 3 (eIF-3) complex, which is involved in protein synthesis of a specialized repertoire of mRNAs and, together with other initiation factors, stimulates binding of mRNA and methionyl-tRNAi to the 40S ribosome. The eIF-3 complex specifically targets and initiates translation of a subset of mRNAs involved in cell proliferation. The sequence is that of Eukaryotic translation initiation factor 3 subunit K from Yarrowia lipolytica (strain CLIB 122 / E 150) (Yeast).